We begin with the raw amino-acid sequence, 407 residues long: Accessory Sec system protein translocase subunit SecY2 (407 aa).

The next 10 helical transmembrane spans lie at 13-33, 65-85, 104-124, 133-153, 158-178, 190-210, 248-268, 287-307, 345-365, and 370-390; these read FLWTLFFLFIYVLGTKLTLPF, LFSVGLSPWMSSMLIWQMFAV, MLLTLVIALIQSVALVLNLPL, TTIMVLDTLVLMAGTYFLIWL, AAMGLGGSIMIVMASMIAYIP, ISSLWLALMLVFSLVFLYLAV, IMYAMTLVSIPQYFLLIIHFL, PAWFILYLLTIFILALAFAFI, FALVGAFYLILISGLPMMVVL, and YLRLSMIPGIFMIFIGMVFSI.

This sequence belongs to the SecY/SEC61-alpha family. SecY2 subfamily. Component of the accessory SecA2/SecY2 protein translocase complex required to export cell wall proteins. May form heterotrimers with SecE and SecG subunits.

The protein resides in the cell membrane. Its function is as follows. Part of the accessory SecA2/SecY2 system specifically required for export of possible cell wall proteins. The central subunit of a protein translocation channel. This Streptococcus sanguinis (strain SK36) protein is Accessory Sec system protein translocase subunit SecY2.